The primary structure comprises 625 residues: 1-deoxy-D-xylulose-5-phosphate synthase (625 aa).

Thiamine diphosphate contacts are provided by residues H80 and 121–123 (GHS). D152 provides a ligand contact to Mg(2+). Residues 153 to 154 (GA), N181, Y288, and E370 contribute to the thiamine diphosphate site. N181 provides a ligand contact to Mg(2+).

It belongs to the transketolase family. DXPS subfamily. In terms of assembly, homodimer. It depends on Mg(2+) as a cofactor. Thiamine diphosphate serves as cofactor.

The enzyme catalyses D-glyceraldehyde 3-phosphate + pyruvate + H(+) = 1-deoxy-D-xylulose 5-phosphate + CO2. It participates in metabolic intermediate biosynthesis; 1-deoxy-D-xylulose 5-phosphate biosynthesis; 1-deoxy-D-xylulose 5-phosphate from D-glyceraldehyde 3-phosphate and pyruvate: step 1/1. In terms of biological role, catalyzes the acyloin condensation reaction between C atoms 2 and 3 of pyruvate and glyceraldehyde 3-phosphate to yield 1-deoxy-D-xylulose-5-phosphate (DXP). This is 1-deoxy-D-xylulose-5-phosphate synthase from Alteromonas mediterranea (strain DSM 17117 / CIP 110805 / LMG 28347 / Deep ecotype).